The sequence spans 258 residues: Tropinone reductase-like 3 (258 aa).

Residue 19 to 43 (IVTASTQGIGFAIAYRLGLEGAAVV) coordinates NAD(+). S150 contributes to the substrate binding site. The active-site Proton acceptor is the Y163.

It belongs to the short-chain dehydrogenases/reductases (SDR) family.

Its function is as follows. Has no tropinone reductase activity. The protein is Tropinone reductase-like 3 of Erythroxylum coca (Coca plant).